The sequence spans 104 residues: UPF0145 protein DET1617 (104 aa).

The protein belongs to the UPF0145 family.

The sequence is that of UPF0145 protein DET1617 from Dehalococcoides mccartyi (strain ATCC BAA-2266 / KCTC 15142 / 195) (Dehalococcoides ethenogenes (strain 195)).